A 150-amino-acid chain; its full sequence is UPF0735 ACT domain-containing protein DSY2247 (150 aa).

An ACT domain is found at 74–149; the sequence is TFSLTLENTA…GVRKIEVIGQ (76 aa).

It belongs to the UPF0735 family.

The sequence is that of UPF0735 ACT domain-containing protein DSY2247 from Desulfitobacterium hafniense (strain Y51).